The sequence spans 167 residues: Arginine repressor (167 aa).

The protein belongs to the ArgR family.

It is found in the cytoplasm. The protein operates within amino-acid biosynthesis; L-arginine biosynthesis [regulation]. Its function is as follows. Regulates arginine biosynthesis genes. The polypeptide is Arginine repressor (Mycobacterium leprae (strain Br4923)).